The chain runs to 272 residues: MFNFDNTLGYEPPLDVHNLTDEQTAISIENLNLFYGQAQALHDISMRIPKGRVTAFIGPSGCGKSTLLRCINRMNDLVEGCKVTGKVRLHGKNVYHPNVDVATLRRRVGMVFQRPNPFPKSIYENVVYGLRLQGVKNSRTLDDAVERSLRSAALWDEVKDRLHENAFGLSGGQQQRLVIARAVAIEPEVLLLDEPTSALDPISTLTIEELINELKTQYTVVIVTHNMQQAARVSDHTAFIHMGKLIEYSDADSIFTSPMKKQTEDYITGRYG.

Residues 26–267 enclose the ABC transporter domain; it reads ISIENLNLFY…PMKKQTEDYI (242 aa). 58-65 contributes to the ATP binding site; sequence GPSGCGKS.

This sequence belongs to the ABC transporter superfamily. Phosphate importer (TC 3.A.1.7) family. The complex is composed of two ATP-binding proteins (PstB), two transmembrane proteins (PstC and PstA) and a solute-binding protein (PstS).

The protein localises to the cell inner membrane. It carries out the reaction phosphate(out) + ATP + H2O = ADP + 2 phosphate(in) + H(+). In terms of biological role, part of the ABC transporter complex PstSACB involved in phosphate import. Responsible for energy coupling to the transport system. The polypeptide is Phosphate import ATP-binding protein PstB 1 (Vibrio parahaemolyticus serotype O3:K6 (strain RIMD 2210633)).